Reading from the N-terminus, the 668-residue chain is MTKRKKLRTSGEGLCPPKPLKNPRLGDFYGDPQSSMLGCLHHPEEPEGKLGPVPSTQQHGEEPGKAVSSSPDEETGSPCRLLRQPEKEPAPLPPSQNSFGRFVPQFAKSRKTVTRKEEMKDEDRGSGAFSLETIAESSAQSPGCQLLVETLGVPLQEATELGDPTQADSARPEQSSQSPVQAVPGSGDSQPDDPPDRGTGLSASQRASQDHLSEQGADDSKPETDRVPGDGGQKEHLPSIDSEGEKPDRGAPQEGGAQRTAGAGLPGGPQEEGDGVPCTPASAPTSGPAPGLGPASWCLEPGSVAQGSPDPQQTPSRMGREGEGTHSSLGCSSLGMVVIADLSTDPTELEERALEVAGPDGQASAISPASPRRKAADGGHRRALPGCTSLTGETTGESGEAGQDGKPPGDVLVGPTASLALAPGSGESMMGAGDSGHASPDTGPCVNQKQEPGPAQEEAELGGQNLERDLEGFRVSPQASVVLEHREIADDPLQEPGAQQGIPDTTSELAGQRDHLPHSADQGTWADSLAVELDFLLDSQIQDALDASDFEAPPEQLFPSGNKPGPCWPGPSSHANGDPVAVAKAQPRTFVGIQASEASRMEDATNVVRGLIVELSNLNRLIMGTHRDLEAFKRLNYRKTKLGGKAPLPYPSKGPGNIPRGDPPWREL.

Disordered stretches follow at residues 1 to 142, 155 to 333, 349 to 465, 482 to 521, and 642 to 668; these read MTKR…AQSP, LQEA…GCSS, LEER…GGQN, VLEHREIADDPLQEPGAQQGIPDTTSELAGQRDHLPHSAD, and LGGKAPLPYPSKGPGNIPRGDPPWREL. The segment covering 114 to 125 has biased composition (basic and acidic residues); it reads TRKEEMKDEDRG. Polar residues predominate over residues 166 to 180; the sequence is QADSARPEQSSQSPV. Residues 208–251 show a composition bias toward basic and acidic residues; it reads SQDHLSEQGADDSKPETDRVPGDGGQKEHLPSIDSEGEKPDRGA. The segment covering 279 to 296 has biased composition (low complexity); the sequence is TPASAPTSGPAPGLGPAS. Positions 305–316 are enriched in polar residues; sequence AQGSPDPQQTPS. Residue Ser-370 is modified to Phosphoserine. The span at 391–400 shows a compositional bias: low complexity; that stretch reads TGETTGESGE.

In terms of assembly, interacts with HSF2BP (via N-terminus) and BRCA2; the interaction with HSF2BP is direct and allows the formation of a ternary complex. The complex BRME1:HSF2BP:BRCA2 interacts with SPATA22, MEIOB and RAD51.

It localises to the chromosome. Functionally, meiotic recombination factor component of recombination bridges involved in meiotic double-strand break repair. Modulates the localization of recombinases DMC1:RAD51 to meiotic double-strand break (DSB) sites through the interaction with and stabilization of the BRCA2:HSF2BP complex during meiotic recombination. Indispensable for the DSB repair, homologous synapsis, and crossover formation that are needed for progression past metaphase I, is essential for spermatogenesis and male fertility. This is Break repair meiotic recombinase recruitment factor 1 from Homo sapiens (Human).